We begin with the raw amino-acid sequence, 368 residues long: MSAPIYLGVIGVGGVGTAFLNQLARLPNAPKLILLARSSQTLLSPTPSYSPTIPAAEWKTAVETPSLTKSGALTPDEIATYLASAPGRSILVDNTSDPALASNYPVFLRKGISVVTPNKKGFSSDLSLWKEIFAAAAEGKALVYHESTVGAGLPVISTLKDLVNTGDEVTRIEGVFSGTLSFLFNTFAPASGSSSAKWSEVVSQAKELGYTEPDPRDDLNGMDVARKLTILARIAGLDVQSPDSFPIESLIPAELTSLPSSADGIAQFMARLPEFDSQMAAIKEGAEKAGKVVRYVGSVDVAKKEVRVGLQQFDKDSAIAGLKGSDNIISFYTRRYGSNPLIVQGAGAGGDVTAMGVTADLLKVIERL.

Residues Val12, Gly14, and Val15 each coordinate NAD(+). Val15 serves as a coordination point for NADP(+). The NADPH site is built by Val15, Lys59, Thr95, Ser96, and Lys119. NAD(+) is bound at residue Thr95. Thr95 is an NADP(+) binding site. Residue Lys119 coordinates NADP(+). Na(+) contacts are provided by Glu146, Val149, Ala151, and Leu153. The NADP(+) site is built by Gly209 and Glu212. The L-homoserine site is built by Glu212 and Asp223. Lys227 serves as the catalytic Proton donor. Gly349 is an NAD(+) binding site. Position 349 (Gly349) interacts with NADP(+). Residue Gly349 coordinates NADPH.

It belongs to the homoserine dehydrogenase family. A metal cation is required as a cofactor.

It carries out the reaction L-homoserine + NADP(+) = L-aspartate 4-semialdehyde + NADPH + H(+). The catalysed reaction is L-homoserine + NAD(+) = L-aspartate 4-semialdehyde + NADH + H(+). Its pathway is amino-acid biosynthesis; L-methionine biosynthesis via de novo pathway; L-homoserine from L-aspartate: step 3/3. It functions in the pathway amino-acid biosynthesis; L-threonine biosynthesis; L-threonine from L-aspartate: step 3/5. Functionally, catalyzes the conversion of L-aspartate-beta-semialdehyde (L-Asa) to L-homoserine (L-Hse), the third step in the biosynthesis of amino acids that derive from aspartate (the aspartate family of amino acids), including methioinine and threonine, the latter of which is a precursor to isoleucine; production of homoserine leads to a branch-point in the pathway as it can either be O-phosphorylated for processing to threonine, or O-acylated for processing to methionine. The chain is Homoserine dehydrogenase from Emericella nidulans (strain FGSC A4 / ATCC 38163 / CBS 112.46 / NRRL 194 / M139) (Aspergillus nidulans).